The following is a 450-amino-acid chain: Phosphoglucosamine mutase (450 aa).

The active-site Phosphoserine intermediate is serine 101. Residues serine 101, aspartate 240, aspartate 242, and aspartate 244 each coordinate Mg(2+). Phosphoserine is present on serine 101.

The protein belongs to the phosphohexose mutase family. The cofactor is Mg(2+). In terms of processing, activated by phosphorylation.

It catalyses the reaction alpha-D-glucosamine 1-phosphate = D-glucosamine 6-phosphate. Catalyzes the conversion of glucosamine-6-phosphate to glucosamine-1-phosphate. This is Phosphoglucosamine mutase from Streptococcus thermophilus (strain CNRZ 1066).